Consider the following 662-residue polypeptide: Forkhead box protein O1 (662 aa).

Disordered regions lie at residues 1–62 (MAEA…PSAS) and 122–165 (GCLH…SRRN). Thr-24 bears the Phosphothreonine; by PKB/AKT1 or PKB/AKT2 and SGK1 mark. The segment covering 33 to 62 (SQSNSATSSPAPSGGAAANPDAAAGLPSAS) has biased composition (low complexity). Residues 126–146 (PAPPQQPPPPGPLSQHPPVPP) are compositionally biased toward pro residues. Residues 167-261 (WGNLSYADLI…KSGKSPRRRA (95 aa)) constitute a DNA-binding region (fork-head). DNA-binding regions lie at residues 218-225 (NSIRHNLS) and 241-244 (SSWW). A Phosphoserine; by STK4/MST1 modification is found at Ser-219. 3 positions are modified to phosphoserine: Ser-225, Ser-241, and Ser-242. Positions 241 to 342 (SSWWMLNPEG…GRLSPIMTEQ (102 aa)) are disordered. Residues Lys-252 and Lys-255 each carry the N6-acetyllysine modification. Phosphoserine; by CDK1 is present on Ser-256. Omega-N-methylarginine; by PRMT1 occurs at positions 258 and 260. Positions 258–260 (RRR) match the Nuclear localization signal motif. Phosphoserine; by PKB/AKT1 and SGK1 is present on Ser-263. Residues Lys-269, Lys-272, and Lys-281 each carry the N6-acetyllysine modification. The span at 271 to 282 (AKSRGRAAKKKA) shows a compositional bias: basic residues. The interval 290-570 (GAGDSPGSQF…RLTQEKTALQ (281 aa)) is sufficient for interaction with NLK. A phosphoserine mark is found at Ser-294 and Ser-305. The segment covering 316-333 (NWSTFRPRTSSNASTISG) has biased composition (polar residues). A Phosphoserine; by PKB/AKT1 modification is found at Ser-326. Ser-329 carries the post-translational modification Phosphoserine; by CK1 and SGK1. Ser-332 is subject to Phosphoserine; by CK1. A Phosphoserine; by DYRK1A modification is found at Ser-336. Thr-340 carries the phosphothreonine modification. The required for interaction with RUNX2 stretch occupies residues 370-466 (SEISNPENME…GGMAQYNCAA (97 aa)). Lys-430 is subject to N6-acetyllysine. The short motif at 469–473 (LKELL) is the Required for interaction with SIRT1 element.

In terms of assembly, interacts with LRPPRC. Interacts with RUNX2; the interaction inhibits RUNX2 transcriptional activity and mediates the IGF1/insulin-dependent BGLAP expression in osteoblasts Interacts with PPP2R1A; the interaction regulates the dephosphorylation of FOXO1 at Thr-24 and Ser-263 leading to its nuclear import. Interacts with NLK. Interacts with SIRT1; the interaction results in the deacetylation of FOXO1 leading to activation of FOXO1-mediated transcription of genes involved in DNA repair and stress resistance. Binds to CDK1. Interacts with the 14-3-3 proteins, YWHAG and YWHAZ; the interactions require insulin-stimulated phosphorylation on Thr-24, promote nuclear exit and loss of transcriptional activity. Interacts with SKP2; the interaction ubiquitinates FOXO1 leading to its proteasomal degradation. The interaction requires the presence of KRIT1. Interacts (via the C-terminal half) with ATF4 (via its DNA binding domain); the interaction occurs in osteoblasts, regulates glucose homeostasis via suppression of beta-cell proliferation and subsequent decrease in insulin production. Interacts with PRMT1; the interaction methylates FOXO1, prevents PKB/AKT1 phosphorylation and retains FOXO1 in the nucleus. Interacts with EP300 and CREBBP; the interactions acetylate FOXO1. Interacts with SIRT2; the interaction is disrupted in response to oxidative stress or serum deprivation, leading to increased level of acetylated FOXO1, which promotes stress-induced autophagy by stimulating E1-like activating enzyme ATG7. Interacts (acetylated form) with ATG7; the interaction is increased in response to oxidative stress or serum deprivation and promotes the autophagic process leading to cell death. Interacts (acetylated form) with PPARG. Interacts with XBP1; this interaction is direct and leads to FOXO1 ubiquitination and degradation via the proteasome pathway. Interacts (via the Fork-head domain) with CEBPA; the interaction increases when FOXO1 is deacetylated. Interacts with WDFY2. Forms a complex with WDFY2 and AKT1. Interacts with CRY1. Interacts with PPIA/CYPA; the interaction promotes FOXO1 dephosphorylation, nuclear accumulation and transcriptional activity. Interacts with TOX4; FOXO1 is required for full induction of TOX4-dependent activity and the interaction is inhibited by insulin. Interacts (when phosphorylated on Ser-263) with STUB1/CHIP. Phosphorylation by NLK promotes nuclear export and inhibits the transcriptional activity. In response to growth factors, phosphorylation on Thr-24, Ser-263 and Ser-326 by PKB/AKT1 promotes nuclear export and inactivation of transactivational activity. Phosphorylation on Thr-24 is required for binding 14-3-3 proteins. Phosphorylation of Ser-263 decreases DNA-binding activity and promotes the phosphorylation of Thr-24 and Ser-326, permitting phosphorylation of Ser-329 and Ser-332, probably by CDK1, leading to nuclear exclusion and loss of function. Stress signals, such as response to oxygen or nitric oxide, attenuate the PKB/AKT1-mediated phosphorylation leading to nuclear retention. Phosphorylation of Ser-336 is independent of IGF1 and leads to reduced function. Dephosphorylated on Thr-24 and Ser-263 by PP2A in beta-cells under oxidative stress leading to nuclear retention. Phosphorylation of Ser-256 by CDK1 disrupts binding of 14-3-3 proteins leading to nuclear accumulation and has no effect on DNA binding nor transcriptional activity. Phosphorylation by STK4/MST1 on Ser-219, upon oxidative stress, inhibits binding to 14-3-3 proteins and nuclear export. PPIA/CYPA promotes its dephosphorylation on Ser-263. In terms of processing, ubiquitinated by SKP2. Ubiquitination leads to proteasomal degradation. Ubiquitinated by STUB1/CHIP; when Ser-263 is phosphorylated. Post-translationally, methylation inhibits AKT1-mediated phosphorylation at Ser-263 and is increased by oxidative stress. Acetylated. Acetylation at Lys-269 and Lys-281 are necessary for autophagic cell death induction. Deacetylated by SIRT2 in response to oxidative stress or serum deprivation, thereby negatively regulating FOXO1-mediated autophagic cell death. Once in the nucleus, acetylated by CREBBP/EP300. Acetylation diminishes the interaction with target DNA and attenuates the transcriptional activity. It increases the phosphorylation at Ser-263. Deacetylation by SIRT1 results in reactivation of the transcriptional activity. Oxidative stress by hydrogen peroxide treatment appears to promote deacetylation and uncoupling of insulin-induced phosphorylation. By contrast, resveratrol acts independently of acetylation. Acetylated at Lys-430, promoting its localization to the nucleus and transcription factor activity. Deacetylation at Lys-430 by SIRT6, promotes its translocation into the cytoplasm, preventing its transcription factor activity. Deacetylation and subsequent inhibition by SIRT6 has different effects depending on cell types: it inhibits gluconeogenesis in hepatocytes, promotes glucose sensing in pancreatic beta-cells and regulates lipid catabolism in brown adipocytes. As to expression, highly in subcutaneous adipose and visceral adipose tissues. Levels higher in piglets than in adults. Also expressed at lower levels in liver and muscle.

The protein localises to the cytoplasm. The protein resides in the nucleus. Transcription factor that is the main target of insulin signaling and regulates metabolic homeostasis in response to oxidative stress. Binds to the insulin response element (IRE) with consensus sequence 5'-TT[G/A]TTTTG-3' and the related Daf-16 family binding element (DBE) with consensus sequence 5'-TT[G/A]TTTAC-3'. Activity suppressed by insulin. Main regulator of redox balance and osteoblast numbers and controls bone mass. Orchestrates the endocrine function of the skeleton in regulating glucose metabolism. Also acts as a key regulator of chondrogenic commitment of skeletal progenitor cells in response to lipid availability: when lipids levels are low, translocates to the nucleus and promotes expression of SOX9, which induces chondrogenic commitment and suppresses fatty acid oxidation. Acts synergistically with ATF4 to suppress osteocalcin/BGLAP activity, increasing glucose levels and triggering glucose intolerance and insulin insensitivity. Also suppresses the transcriptional activity of RUNX2, an upstream activator of osteocalcin/BGLAP. Acts as an inhibitor of glucose sensing in pancreatic beta cells by acting as a transcription repressor and suppressing expression of PDX1. In hepatocytes, promotes gluconeogenesis by acting together with PPARGC1A and CEBPA to activate the expression of genes such as IGFBP1, G6PC1 and PCK1. Also promotes gluconeogenesis by directly promoting expression of PPARGC1A and G6PC1. Important regulator of cell death acting downstream of CDK1, PKB/AKT1 and STK4/MST1. Promotes neural cell death. Mediates insulin action on adipose tissue. Regulates the expression of adipogenic genes such as PPARG during preadipocyte differentiation and, adipocyte size and adipose tissue-specific gene expression in response to excessive calorie intake. Regulates the transcriptional activity of GADD45A and repair of nitric oxide-damaged DNA in beta-cells. Required for the autophagic cell death induction in response to starvation or oxidative stress in a transcription-independent manner. Mediates the function of MLIP in cardiomyocytes hypertrophy and cardiac remodeling. Positive regulator of apoptosis in cardiac smooth muscle cells as a result of its transcriptional activation of pro-apoptotic genes. Regulates endothelial cell (EC) viability and apoptosis in a PPIA/CYPA-dependent manner via transcription of CCL2 and BCL2L11 which are involved in EC chemotaxis and apoptosis. In Sus scrofa (Pig), this protein is Forkhead box protein O1 (FOXO1).